The sequence spans 1002 residues: Golgin subfamily A member 2 (1002 aa).

A compositionally biased stretch (pro residues) spans 1–11; that stretch reads MWPQPRLPPRP. An interaction with p115/USO1 region spans residues 1-84; that stretch reads MWPQPRLPPR…AATLQPSDDT (84 aa). A disordered region spans residues 1–107; sequence MWPQPRLPPR…TSMAASQNHD (107 aa). Positions 16–892 form a coiled coil; that stretch reads ETRQSKLAAA…LELQELVLRL (877 aa). Dimethylated arginine occurs at positions 18, 30, and 35. The Nuclear localization signal signature appears at 26–49; sequence KKKLREYQQRNSPGVPTGAKKKKK. Ser37 is subject to Phosphoserine. Positions 52–63 are enriched in polar residues; that stretch reads NGSNPETTTSGG. Phosphoserine is present on Ser66. Residues 95–105 show a composition bias toward polar residues; sequence ASLTSMAASQN. Phosphoserine is present on residues Ser273, Ser438, and Ser690. The segment at 694–724 is disordered; sequence HPGEGDGLDREEEEDEEEEEEEAVAVPQPMP. The span at 702 to 716 shows a compositional bias: acidic residues; it reads DREEEEDEEEEEEEA. Residues Ser937, Ser953, and Ser981 each carry the phosphoserine modification. The interaction with GORASP1/GRASP65 stretch occupies residues 992 to 1002; sequence DENDEVKITVI.

The protein belongs to the GOLGA2 family. In terms of assembly, homodimer, may assemble into homohexamers. Homotetramer; forms a parallel homotetramer with a flexible rod-like structure that can give rise to I- and Y-shaped conformations. Interacts with GORASP1/GRASP65. The homooligomer forms a complex with GORASP1 with a 1:1 stoichiometry. Interacts with RAB1B that has been activated by GTP-binding. Interacts with p115/USO1; interaction with p115/USO1 inhibits interaction with STX5 and/or RAB1B. Interacts with STX5. Interacts with ZFPL1. Interacts with AKAP450/AKAP9; leading to recruit AKAP450/AKAP9 to the cis-Golgi. Cleaved by caspases at the onset of apoptosis. Post-translationally, methylation by PRMT5 is required for Golgi ribbon formation. While dimethylation at Arg-30 and Arg-35 are confirmed in vivo, it is unclear whether Arg-18 is methylated in vivo. In terms of processing, phosphorylated at Ser-37 by CDK1 at the onset of mitosis, inhibiting the interaction with p115/USO1 and triggering Golgi disassembly. Phosphorylated at Ser-37 in prophase as the Golgi complex starts to break down, and remains phosphorylated during further breakdown and partitioning of the Golgi fragments in metaphase and anaphase. In telophase, GM130 is dephosphorylated by PP2A as the Golgi fragments start to reassemble.

The protein resides in the golgi apparatus. The protein localises to the cis-Golgi network membrane. It localises to the endoplasmic reticulum-Golgi intermediate compartment membrane. It is found in the cytoplasm. Its subcellular location is the cytoskeleton. The protein resides in the spindle pole. Peripheral membrane component of the cis-Golgi stack that acts as a membrane skeleton that maintains the structure of the Golgi apparatus, and as a vesicle thether that facilitates vesicle fusion to the Golgi membrane. Required for normal protein transport from the endoplasmic reticulum to the Golgi apparatus and the cell membrane. Together with p115/USO1 and STX5, involved in vesicle tethering and fusion at the cis-Golgi membrane to maintain the stacked and inter-connected structure of the Golgi apparatus. Plays a central role in mitotic Golgi disassembly: phosphorylation at Ser-37 by CDK1 at the onset of mitosis inhibits the interaction with p115/USO1, preventing tethering of COPI vesicles and thereby inhibiting transport through the Golgi apparatus during mitosis. Also plays a key role in spindle pole assembly and centrosome organization. Promotes the mitotic spindle pole assembly by activating the spindle assembly factor TPX2 to nucleate microtubules around the Golgi and capture them to couple mitotic membranes to the spindle: upon phosphorylation at the onset of mitosis, GOLGA2 interacts with importin-alpha via the nuclear localization signal region, leading to recruit importin-alpha to the Golgi membranes and liberate the spindle assembly factor TPX2 from importin-alpha. TPX2 then activates AURKA kinase and stimulates local microtubule nucleation. Upon filament assembly, nascent microtubules are further captured by GOLGA2, thus linking Golgi membranes to the spindle. Regulates the meiotic spindle pole assembly, probably via the same mechanism. Also regulates the centrosome organization. Also required for the Golgi ribbon formation and glycosylation of membrane and secretory proteins. The protein is Golgin subfamily A member 2 (GOLGA2) of Homo sapiens (Human).